The chain runs to 228 residues: Lipoprotein-releasing system ATP-binding protein LolD (228 aa).

The ABC transporter domain occupies 7–228; that stretch reads LNCQNLTKDY…MQDGVLRPEM (222 aa). 43–50 contacts ATP; the sequence is GSSGSGKS.

Belongs to the ABC transporter superfamily. Lipoprotein translocase (TC 3.A.1.125) family. The complex is composed of two ATP-binding proteins (LolD) and two transmembrane proteins (LolC and LolE).

The protein localises to the cell inner membrane. Part of the ABC transporter complex LolCDE involved in the translocation of mature outer membrane-directed lipoproteins, from the inner membrane to the periplasmic chaperone, LolA. Responsible for the formation of the LolA-lipoprotein complex in an ATP-dependent manner. In Mannheimia succiniciproducens (strain KCTC 0769BP / MBEL55E), this protein is Lipoprotein-releasing system ATP-binding protein LolD.